Reading from the N-terminus, the 133-residue chain is U-scoloptoxin(11)-Sm1a (133 aa).

The first 19 residues, 1-19 (MIWFLAFILFLAAGELVSS), serve as a signal peptide directing secretion.

Belongs to the scoloptoxin-11 family. Post-translationally, contains 10 disulfide bonds. As to expression, expressed by the venom gland.

The protein resides in the secreted. The sequence is that of U-scoloptoxin(11)-Sm1a from Scolopendra morsitans (Tanzanian blue ringleg centipede).